The chain runs to 275 residues: Elongation factor Ts (275 aa).

The interval 76–79 is involved in Mg(2+) ion dislocation from EF-Tu; that stretch reads TDFV.

Belongs to the EF-Ts family.

Its subcellular location is the cytoplasm. Associates with the EF-Tu.GDP complex and induces the exchange of GDP to GTP. It remains bound to the aminoacyl-tRNA.EF-Tu.GTP complex up to the GTP hydrolysis stage on the ribosome. The chain is Elongation factor Ts from Rhodococcus erythropolis (strain PR4 / NBRC 100887).